The following is a 261-amino-acid chain: Ribonuclease HII (261 aa).

Residues 71–259 form the RNase H type-2 domain; it reads QYIAGVDEVG…VKEAKLHFES (189 aa). Residues D77, E78, and D169 each contribute to the a divalent metal cation site.

Belongs to the RNase HII family. Mn(2+) serves as cofactor. Mg(2+) is required as a cofactor.

It localises to the cytoplasm. It carries out the reaction Endonucleolytic cleavage to 5'-phosphomonoester.. Its function is as follows. Endonuclease that specifically degrades the RNA of RNA-DNA hybrids. This Listeria innocua serovar 6a (strain ATCC BAA-680 / CLIP 11262) protein is Ribonuclease HII.